Consider the following 599-residue polypeptide: Aspartate--tRNA(Asp/Asn) ligase (599 aa).

Glu-183 lines the L-aspartate pocket. An aspartate region spans residues 207–210 (QIFK). Arg-229 serves as a coordination point for L-aspartate. Residues 229–231 (RDE) and Gln-238 each bind ATP. His-456 serves as a coordination point for L-aspartate. Glu-490 provides a ligand contact to ATP. Residue Arg-497 coordinates L-aspartate. Residue 542–545 (GLDR) coordinates ATP.

It belongs to the class-II aminoacyl-tRNA synthetase family. Type 1 subfamily. In terms of assembly, homodimer.

Its subcellular location is the cytoplasm. The enzyme catalyses tRNA(Asx) + L-aspartate + ATP = L-aspartyl-tRNA(Asx) + AMP + diphosphate. Its function is as follows. Aspartyl-tRNA synthetase with relaxed tRNA specificity since it is able to aspartylate not only its cognate tRNA(Asp) but also tRNA(Asn). Reaction proceeds in two steps: L-aspartate is first activated by ATP to form Asp-AMP and then transferred to the acceptor end of tRNA(Asp/Asn). The protein is Aspartate--tRNA(Asp/Asn) ligase of Protochlamydia amoebophila (strain UWE25).